The chain runs to 846 residues: Translation initiation factor IF-2 (846 aa).

The tr-type G domain maps to 345–512 (SRAPVVTIMG…AVLLQSEVLE (168 aa)). Positions 354-361 (GHVDHGKT) are G1. 354–361 (GHVDHGKT) is a binding site for GTP. A G2 region spans residues 379 to 383 (GITQH). The interval 400–403 (DTPG) is G3. GTP contacts are provided by residues 400–404 (DTPGH) and 454–457 (NKID). The tract at residues 454-457 (NKID) is G4. Residues 490–492 (SAK) are G5.

This sequence belongs to the TRAFAC class translation factor GTPase superfamily. Classic translation factor GTPase family. IF-2 subfamily.

The protein resides in the cytoplasm. In terms of biological role, one of the essential components for the initiation of protein synthesis. Protects formylmethionyl-tRNA from spontaneous hydrolysis and promotes its binding to the 30S ribosomal subunits. Also involved in the hydrolysis of GTP during the formation of the 70S ribosomal complex. In Francisella tularensis subsp. holarctica (strain FTNF002-00 / FTA), this protein is Translation initiation factor IF-2.